Consider the following 482-residue polypeptide: Ubiquitin carboxyl-terminal hydrolase MINDY-1 (482 aa).

Residues 1–119 are disordered; the sequence is MEQPQAECPA…RPQQLPQSPR (119 aa). Positions 21 to 66 are enriched in basic and acidic residues; the sequence is ESEKHEALSGPEKHPQDKDGADAAPEKHPQDKDGADAHGEAGKQKS. Residues 82–94 show a composition bias toward pro residues; sequence CPPPEASSSPPGP. Positions 106–119 are enriched in polar residues; it reads EACSRPQQLPQSPR. Residue Ser-117 is modified to Phosphoserine. Cys-151 (nucleophile) is an active-site residue. His-333 (proton acceptor) is an active-site residue. Residues 402-441 form a ubiquitin-binding domain (UBD) region; sequence QVDQDYLIALSLQQQQQPQGMLGLSDLELAQQLQQEEYQQ. Residues 437 to 446 show a composition bias toward low complexity; that stretch reads EEYQQQQAVQ. Residues 437–482 are disordered; it reads EEYQQQQAVQPVRTRAPSSPGRGATSGRPAGERRQRSKTESDCVLL. Ser-454 carries the phosphoserine modification. Over residues 466–482 the composition is skewed to basic and acidic residues; that stretch reads AGERRQRSKTESDCVLL.

Belongs to the MINDY deubiquitinase family. FAM63 subfamily.

It catalyses the reaction Thiol-dependent hydrolysis of ester, thioester, amide, peptide and isopeptide bonds formed by the C-terminal Gly of ubiquitin (a 76-residue protein attached to proteins as an intracellular targeting signal).. In terms of biological role, hydrolase that can specifically remove 'Lys-48'-linked conjugated ubiquitin from proteins. Has exodeubiquitinase activity and has a preference for long polyubiquitin chains. May play a regulatory role at the level of protein turnover. This Rattus norvegicus (Rat) protein is Ubiquitin carboxyl-terminal hydrolase MINDY-1 (Mindy1).